Consider the following 483-residue polypeptide: ATP synthase subunit beta (483 aa).

Position 162-169 (162-169 (GGAGVGKT)) interacts with ATP.

Belongs to the ATPase alpha/beta chains family. F-type ATPases have 2 components, CF(1) - the catalytic core - and CF(0) - the membrane proton channel. CF(1) has five subunits: alpha(3), beta(3), gamma(1), delta(1), epsilon(1). CF(0) has four main subunits: a(1), b(1), b'(1) and c(9-12).

The protein resides in the cellular thylakoid membrane. It carries out the reaction ATP + H2O + 4 H(+)(in) = ADP + phosphate + 5 H(+)(out). Its function is as follows. Produces ATP from ADP in the presence of a proton gradient across the membrane. The catalytic sites are hosted primarily by the beta subunits. This is ATP synthase subunit beta from Rippkaea orientalis (strain PCC 8801 / RF-1) (Cyanothece sp. (strain PCC 8801)).